The sequence spans 984 residues: Ephrin type-A receptor 3 (984 aa).

An N-terminal signal peptide occupies residues 1-20; that stretch reads MDCHLSILILFGCCVLSCSR. Topologically, residues 21 to 541 are extracellular; the sequence is ELSPQPSNEV…SFSISGENSH (521 aa). Residues 29–207 form the Eph LBD domain; that stretch reads EVNLLDSKTI…YFKKCPFTVK (179 aa). Asn232, Asn337, Asn391, Asn404, and Asn493 each carry an N-linked (GlcNAc...) asparagine glycan. 2 consecutive Fibronectin type-III domains span residues 325–435 and 436–532; these read PPSA…TNQA and APSP…SPDS. The helical transmembrane segment at 542–565 threads the bilayer; sequence VVMIAISAAVAIIVLTVVTYVLVG. Over 566 to 984 the chain is Cytoplasmic; that stretch reads RFCGYHKSKH…TQSKNGPVPV (419 aa). 2 positions are modified to phosphotyrosine; by autocatalysis: Tyr597 and Tyr603. The region spanning 622–883 is the Protein kinase domain; sequence IAIDKVVGAG…QIVSILDKLI (262 aa). Residues 629-634, Lys654, and 701-707 each bind ATP; these read GAGEFG and EYMENGS. Residue Tyr702 is modified to Phosphotyrosine; by autocatalysis. The active-site Proton acceptor is Asp747. 751–752 serves as a coordination point for ATP; the sequence is RN. Tyr780 bears the Phosphotyrosine; by autocatalysis mark. The SAM domain maps to 912-976; that stretch reads ATFHTTGDWL…ISSIKALETQ (65 aa). Position 938 is a phosphotyrosine (Tyr938). The short motif at 982–984 is the PDZ-binding element; it reads VPV.

The protein belongs to the protein kinase superfamily. Tyr protein kinase family. Ephrin receptor subfamily. Heterotetramer upon binding of the ligand. The heterotetramer is composed of an ephrin dimer and a receptor dimer. Oligomerization is probably required to induce biological responses. Forms a ternary EFNA5-EPHA3-ADAM10 complex mediating EFNA5 extracellular domain shedding by ADAM10 which regulates the EFNA5-EPHA3 complex internalization and function. Interacts (phosphorylated) with PTPN1; dephosphorylates EPHA3 and may regulate its trafficking and function. Interacts (phosphorylated) with CRK; mediates EFNA5-EPHA3 signaling through RHOA GTPase activation. Interacts with NCK1 (via SH2 domain); mediates EFNA5-EPHA3 signaling. In terms of processing, autophosphorylates upon activation by EFNA5. Phosphorylation on Tyr-603 mediates interaction with NCK1. Dephosphorylated by PTPN1. Most abundant in the heart, brain and lung.

It is found in the cell membrane. It catalyses the reaction L-tyrosyl-[protein] + ATP = O-phospho-L-tyrosyl-[protein] + ADP + H(+). In terms of biological role, receptor tyrosine kinase which binds promiscuously membrane-bound ephrin family ligands residing on adjacent cells, leading to contact-dependent bidirectional signaling into neighboring cells. The signaling pathway downstream of the receptor is referred to as forward signaling while the signaling pathway downstream of the ephrin ligand is referred to as reverse signaling. Highly promiscuous for ephrin-A ligands it binds preferentially EFNA5. Upon activation by EFNA5 regulates cell-cell adhesion, cytoskeletal organization and cell migration. Plays a role in cardiac cells migration and differentiation and regulates the formation of the atrioventricular canal and septum during development probably through activation by EFNA1. Involved in the retinotectal mapping of neurons. May also control the segregation but not the guidance of motor and sensory axons during neuromuscular circuit development. In Rattus norvegicus (Rat), this protein is Ephrin type-A receptor 3 (Epha3).